A 253-amino-acid polypeptide reads, in one-letter code: 5-oxoprolinase subunit A (253 aa).

The protein belongs to the LamB/PxpA family. In terms of assembly, forms a complex composed of PxpA, PxpB and PxpC.

The enzyme catalyses 5-oxo-L-proline + ATP + 2 H2O = L-glutamate + ADP + phosphate + H(+). Its function is as follows. Catalyzes the cleavage of 5-oxoproline to form L-glutamate coupled to the hydrolysis of ATP to ADP and inorganic phosphate. In Bacillus licheniformis (strain ATCC 14580 / DSM 13 / JCM 2505 / CCUG 7422 / NBRC 12200 / NCIMB 9375 / NCTC 10341 / NRRL NRS-1264 / Gibson 46), this protein is 5-oxoprolinase subunit A.